Consider the following 114-residue polypeptide: MKTIIVFLSLLVLATKFGDANEGVNQEQMKEVIQNEFREDFLNEMAAMSLLQQLEAIESTLLEKEADRNSRQKRCLGENVPCGDFPCCGKLVCQKTFGYGWLYKSPYCVKPSNG.

Positions 1–20 (MKTIIVFLSLLVLATKFGDA) are cleaved as a signal peptide. A propeptide spanning residues 21–74 (NEGVNQEQMKEVIQNEFREDFLNEMAAMSLLQQLEAIESTLLEKEADRNSRQKR) is cleaved from the precursor. 3 disulfide bridges follow: Cys75-Cys88, Cys82-Cys93, and Cys87-Cys108.

The protein belongs to the neurotoxin 14 (magi-1) family. 03 (ICK-30-40) subfamily. Expressed by the venom gland.

It is found in the secreted. Its function is as follows. Ion channel inhibitor. The protein is U17-barytoxin-Tl1a of Trittame loki (Brush-footed trapdoor spider).